The following is a 334-amino-acid chain: GTP 3',8-cyclase (334 aa).

The region spanning Arg8–Ala244 is the Radical SAM core domain. A GTP-binding site is contributed by Arg17. Positions 24 and 28 each coordinate [4Fe-4S] cluster. Tyr30 is a binding site for S-adenosyl-L-methionine. [4Fe-4S] cluster is bound at residue Cys31. Arg70 provides a ligand contact to GTP. Gly74 is a binding site for S-adenosyl-L-methionine. Thr101 contributes to the GTP binding site. Ser125 contributes to the S-adenosyl-L-methionine binding site. Lys163 is a GTP binding site. Position 197 (Met197) interacts with S-adenosyl-L-methionine. [4Fe-4S] cluster-binding residues include Cys261 and Cys264. Arg266–Arg268 serves as a coordination point for GTP. A [4Fe-4S] cluster-binding site is contributed by Cys278.

Belongs to the radical SAM superfamily. MoaA family. As to quaternary structure, monomer and homodimer. [4Fe-4S] cluster serves as cofactor.

It catalyses the reaction GTP + AH2 + S-adenosyl-L-methionine = (8S)-3',8-cyclo-7,8-dihydroguanosine 5'-triphosphate + 5'-deoxyadenosine + L-methionine + A + H(+). Its pathway is cofactor biosynthesis; molybdopterin biosynthesis. Catalyzes the cyclization of GTP to (8S)-3',8-cyclo-7,8-dihydroguanosine 5'-triphosphate. The polypeptide is GTP 3',8-cyclase (Xanthomonas axonopodis pv. citri (strain 306)).